Here is a 406-residue protein sequence, read N- to C-terminus: Probable 2,3-bisphosphoglycerate-independent phosphoglycerate mutase (406 aa).

The protein belongs to the BPG-independent phosphoglycerate mutase family. A-PGAM subfamily.

The enzyme catalyses (2R)-2-phosphoglycerate = (2R)-3-phosphoglycerate. It participates in carbohydrate degradation; glycolysis; pyruvate from D-glyceraldehyde 3-phosphate: step 3/5. Functionally, catalyzes the interconversion of 2-phosphoglycerate and 3-phosphoglycerate. The polypeptide is Probable 2,3-bisphosphoglycerate-independent phosphoglycerate mutase (Thermus thermophilus (strain ATCC 27634 / DSM 579 / HB8)).